The following is a 295-amino-acid chain: Protein LplC (295 aa).

6 helical membrane-spanning segments follow: residues 21 to 41, 81 to 101, 116 to 136, 142 to 162, 199 to 219, and 260 to 280; these read ILFL…IIAG, VSIF…FTMA, LNLV…YLVV, LDTY…LIII, VIAT…FHAL, and GIKL…YPFL. The ABC transmembrane type-1 domain occupies 79 to 280; the sequence is MGVSIFITVV…LPILAVYPFL (202 aa).

Belongs to the binding-protein-dependent transport system permease family. CysTW subfamily.

Its subcellular location is the cell membrane. The protein is Protein LplC (lplC) of Bacillus subtilis (strain 168).